The sequence spans 747 residues: Elongation factor G, mitochondrial (747 aa).

Residues 1-16 (MSLIMRVLNGNLSLRL) constitute a mitochondrion transit peptide. Residues 42–319 (ERIRNIGISA…AIIDYLPNPG (278 aa)) form the tr-type G domain. GTP contacts are provided by residues 51-58 (AHIDSGKT), 118-122 (DTPGH), and 172-175 (NKLD).

It belongs to the TRAFAC class translation factor GTPase superfamily. Classic translation factor GTPase family. EF-G/EF-2 subfamily.

The protein localises to the mitochondrion. Its pathway is protein biosynthesis; polypeptide chain elongation. In terms of biological role, mitochondrial GTPase that catalyzes the GTP-dependent ribosomal translocation step during translation elongation. During this step, the ribosome changes from the pre-translocational (PRE) to the post-translocational (POST) state as the newly formed A-site-bound peptidyl-tRNA and P-site-bound deacylated tRNA move to the P and E sites, respectively. Catalyzes the coordinated movement of the two tRNA molecules, the mRNA and conformational changes in the ribosome. Essential during development as it acts as a retrograde signal from mitochondria to the nucleus to slow down cell proliferation if mitochondrial energy output is low. This Drosophila grimshawi (Hawaiian fruit fly) protein is Elongation factor G, mitochondrial.